The sequence spans 797 residues: Peroxisome proliferator-activated receptor gamma coactivator 1-alpha (797 aa).

Lys77 carries the N6-acetyllysine modification. A disordered region spans residues 101–138; the sequence is EDGLPSFDALTDGAVTTDNEASPSSMPDGTPPPQEAEE. Positions 114-127 are enriched in polar residues; it reads AVTTDNEASPSSMP. The short motif at 142 to 146 is the LXXLL motif element; the sequence is LKKLL. Lys144 bears the N6-acetyllysine mark. A Phosphothreonine; by AMPK modification is found at Thr177. N6-acetyllysine is present on Lys183. The tract at residues 212-276 is disordered; it reads YLTTNDDPPH…NDPKGSPFEN (65 aa). The segment covering 218–236 has biased composition (basic and acidic residues); that stretch reads DPPHTKPTENRNSSRDKCA. A compositionally biased stretch (polar residues) spans 243–259; it reads TQPQSQHAQAKPTTLSL. Lys253, Lys270, Lys277, Lys320, Lys346, Lys412, Lys441, and Lys450 each carry N6-acetyllysine. Residues 289–376 form a disordered region; it reads GTAGLTPPTT…HEERKTKRPS (88 aa). The segment at 292-338 is interaction with PPARG; that stretch reads GLTPPTTPPHKANQDNPFKASPKLKPSCKTVVPPPTKRARYSECSGT. Residues 349-797 are mediates interaction with RNF34; that stretch reads EQSELYAQLS…LKEAQRSLRR (449 aa). Position 538 is a phosphoserine; by AMPK (Ser538). Disordered regions lie at residues 543 to 598, 612 to 634, and 648 to 668; these read NSPC…SSRS, HRNSPLYVRSRSRSPYSRRPRYD, and EYRKEHEKRESERAKQRERQK. Positions 562–577 are enriched in basic residues; sequence QRMRSRSRSFSRHRSC. Positions 578 to 598 are enriched in low complexity; the sequence is SRSPYSRSRSRSPGSRSSSRS. A compositionally biased stretch (basic residues) spans 621–630; that stretch reads SRSRSPYSRR. One can recognise an RRM domain in the interval 676–752; sequence RVIYVGKIRP…TDFELYFCGR (77 aa). Lys757 and Lys778 each carry N6-acetyllysine.

Homooligomer. Interacts with MYBBP1A; inhibits MYBBP1A transcriptional activation. Interacts with PRDM16, LPIN1 and PML. Interacts (via LXXLL motif) with RORA and RORC (via AF-2 motif); activates RORA and RORC transcriptional activation. Interacts with LRPPRC. Interacts with FOXO1. Interacts with NR5A2. Post-translationally, phosphorylation by AMPK in skeletal muscle increases activation of its own promoter. Phosphorylated by CLK2. Heavily acetylated by KAT2A/GCN5 under conditions of high nutrients, leading to inactivation of PPARGC1A. Deacetylated by SIRT1 in low nutrients/high NAD conditions, leading to its activation. In terms of processing, ubiquitinated. Ubiquitination by RNF34 induces proteasomal degradation. As to expression, white quadriceps and red tibialis anterior (TA) muscles, liver, kidney and brown adipose tissue (at protein level). Skeletal muscle, brown adipose tissue, heart, kidney and brain.

It is found in the nucleus. The protein localises to the PML body. In terms of biological role, transcriptional coactivator for steroid receptors and nuclear receptors. Greatly increases the transcriptional activity of PPARG and thyroid hormone receptor on the uncoupling protein promoter. Can regulate key mitochondrial genes that contribute to the program of adaptive thermogenesis. Plays an essential role in metabolic reprogramming in response to dietary availability through coordination of the expression of a wide array of genes involved in glucose and fatty acid metabolism. Acts as a key regulator of gluconeogenesis: stimulates hepatic gluconeogenesis by increasing the expression of gluconeogenic enzymes, and acting together with FOXO1 to promote the fasting gluconeogenic program. Induces the expression of PERM1 in the skeletal muscle in an ESRRA-dependent manner. Also involved in the integration of the circadian rhythms and energy metabolism. Required for oscillatory expression of clock genes, such as BMAL1 and NR1D1, through the coactivation of RORA and RORC, and metabolic genes, such as PDK4 and PEPCK. The sequence is that of Peroxisome proliferator-activated receptor gamma coactivator 1-alpha (Ppargc1a) from Mus musculus (Mouse).